Here is a 329-residue protein sequence, read N- to C-terminus: Secretory carrier-associated membrane protein 2 (329 aa).

The segment at 1–74 (MSAFDTNPFA…PSVEPAQPTP (74 aa)) is disordered. Residues 1–153 (MSAFDTNPFA…DYQRICKMLY (153 aa)) lie on the Cytoplasmic side of the membrane. Polar residues-rich tracts occupy residues 19-31 (QDPS…NAPQ) and 40-51 (FSETNAATTVPA). The helical transmembrane segment at 154-174 (YLWMLHSVTLFLNLLACLAWF) threads the bilayer. At 175–181 (TSDAANG) the chain is on the lumenal side. Residues 182–202 (TAFGLSILWFLIFTPCAFLCW) traverse the membrane as a helical segment. The Cytoplasmic portion of the chain corresponds to 203–218 (YRPIYKAFRSDNSFSF). The tract at residues 203–218 (YRPIYKAFRSDNSFSF) is interaction with SLC9A7. The chain crosses the membrane as a helical span at residues 219 to 239 (FVFFFVFFCQIGIYFIQLIGL). The Lumenal portion of the chain corresponds to 240–262 (PNLGTSGWLAALSTMKNGPLAVT). Residues 263–283 (IIMMVVAGFFTLCAGLSLFLL) traverse the membrane as a helical segment. Over 284–329 (QRVHAFYRRTGASFQQAQEEFSQGIFSSRTFRGAASSAARGAFQGN) the chain is Cytoplasmic. A phosphoserine mark is found at Ser319 and Ser320.

Belongs to the SCAMP family. Interacts with SLC6A4 and SLC9A7. Interacts with SLC9A5; this interaction regulates SLC9A5 cell-surface targeting and SLC9A5 activity.

It is found in the golgi apparatus. It localises to the trans-Golgi network membrane. The protein localises to the recycling endosome membrane. Functionally, functions in post-Golgi recycling pathways. Acts as a recycling carrier to the cell surface. The chain is Secretory carrier-associated membrane protein 2 (Scamp2) from Mus musculus (Mouse).